A 370-amino-acid chain; its full sequence is Proto-oncogene Wnt-1 (370 aa).

The N-terminal stretch at 1 to 27 (MGLWALLPSWVSTTLLLALTALPAALA) is a signal peptide. N-linked (GlcNAc...) asparagine glycosylation is present at asparagine 29. 11 cysteine pairs are disulfide-bonded: cysteine 93–cysteine 104, cysteine 143–cysteine 151, cysteine 153–cysteine 170, cysteine 218–cysteine 232, cysteine 220–cysteine 227, cysteine 299–cysteine 330, cysteine 315–cysteine 325, cysteine 329–cysteine 369, cysteine 345–cysteine 360, cysteine 347–cysteine 357, and cysteine 352–cysteine 353. The O-palmitoleoyl serine; by PORCN moiety is linked to residue serine 224. 2 N-linked (GlcNAc...) asparagine glycosylation sites follow: asparagine 316 and asparagine 346. N-linked (GlcNAc...) asparagine glycosylation is present at asparagine 359.

This sequence belongs to the Wnt family. In terms of assembly, forms a soluble 1:1 complex with AFM; this prevents oligomerization and is required for prolonged biological activity. The complex with AFM may represent the physiological form in body fluids. Interacts with PORCN. Interacts with RSPO1, RSPO2 and RSPO3. Interacts with WLS. Post-translationally, palmitoleoylation is required for efficient binding to frizzled receptors. Palmitoleoylation is necessary for proper trafficking to cell surface. Depalmitoleoylated by NOTUM, leading to inhibit Wnt signaling pathway. As to expression, testis and mid-gestational embryos. In the testis, detected only in postmeiotic germ cells undergoing differentiation from round spermatids into mature spermatozoa. In the embryos, expression is restricted to the developing CNS in regions of the neural tube other than the telencephalon. Expressed in osteoblast; expression levels increase with advancing osteoblast differentiation. Expressed in the brain, femur, spleen, and hematopoietic bone marrow.

It localises to the secreted. The protein resides in the extracellular space. It is found in the extracellular matrix. Functionally, ligand for members of the frizzled family of seven transmembrane receptors. Acts in the canonical Wnt signaling pathway by promoting beta-catenin-dependent transcriptional activation. In some developmental processes, is also a ligand for the coreceptor RYK, thus triggering Wnt signaling. Plays an essential role in the development of the embryonic brain and central nervous system (CNS). Has a role in osteoblast function, bone development and bone homeostasis. This chain is Proto-oncogene Wnt-1 (Wnt1), found in Mus musculus (Mouse).